Here is a 140-residue protein sequence, read N- to C-terminus: Putative pre-16S rRNA nuclease (140 aa).

This sequence belongs to the YqgF nuclease family.

It is found in the cytoplasm. Could be a nuclease involved in processing of the 5'-end of pre-16S rRNA. This is Putative pre-16S rRNA nuclease from Actinobacillus succinogenes (strain ATCC 55618 / DSM 22257 / CCUG 43843 / 130Z).